Consider the following 67-residue polypeptide: Probable pilin MJ1400 (67 aa).

A propeptide spanning residues 1–13 (MKFIMKFIKSNKG) is cleaved from the precursor. Positions 14–22 (QISLEFSLL) match the QXSXEXXXL motif.

Post-translationally, the N-terminus is cleaved by the prepilin peptidase EppA, which recognizes the class III signal sequence.

It is found in the secreted. The protein localises to the cell surface. The protein resides in the fimbrium. The polypeptide is Probable pilin MJ1400 (Methanocaldococcus jannaschii (strain ATCC 43067 / DSM 2661 / JAL-1 / JCM 10045 / NBRC 100440) (Methanococcus jannaschii)).